A 435-amino-acid chain; its full sequence is Gamma-glutamyl phosphate reductase (435 aa).

Belongs to the gamma-glutamyl phosphate reductase family.

It is found in the cytoplasm. It catalyses the reaction L-glutamate 5-semialdehyde + phosphate + NADP(+) = L-glutamyl 5-phosphate + NADPH + H(+). It participates in amino-acid biosynthesis; L-proline biosynthesis; L-glutamate 5-semialdehyde from L-glutamate: step 2/2. In terms of biological role, catalyzes the NADPH-dependent reduction of L-glutamate 5-phosphate into L-glutamate 5-semialdehyde and phosphate. The product spontaneously undergoes cyclization to form 1-pyrroline-5-carboxylate. In Synechococcus sp. (strain CC9605), this protein is Gamma-glutamyl phosphate reductase.